The sequence spans 328 residues: UPF0285 protein Mevan_1551 (328 aa).

It belongs to the UPF0285 family.

In Methanococcus vannielii (strain ATCC 35089 / DSM 1224 / JCM 13029 / OCM 148 / SB), this protein is UPF0285 protein Mevan_1551.